Here is a 349-residue protein sequence, read N- to C-terminus: tRNA pseudouridine synthase D (349 aa).

Phe27 lines the substrate pocket. The active-site Nucleophile is the Asp80. Asn129 is a substrate binding site. A TRUD domain is found at 155-303 (GVPNYFGAQR…VEASRRAMLL (149 aa)). Phe329 is a substrate binding site.

Belongs to the pseudouridine synthase TruD family.

It catalyses the reaction uridine(13) in tRNA = pseudouridine(13) in tRNA. Responsible for synthesis of pseudouridine from uracil-13 in transfer RNAs. This is tRNA pseudouridine synthase D from Salmonella newport (strain SL254).